The following is a 533-amino-acid chain: MSKTAKNTKTIKSVKSVNKDNKPNKDNKDDKNVDEEVINWLDKYKPTSSSQILGDKNNINRIKAFLSQFTKENAEINCPNLILTGNNGVGKTLMTDLIIQEKGFEKITADLTNISVARKSKKKKKVEKEYNGSNRTIKTYYTTLYNKSVSPTGDLIEKKIVVVFDDVSNISNNKEKEAIKSIIKINSKEKKIPIIIIANMKHSKTVNELKKMVTVTVKNTNSQGRKENKRTSNEIIIKAPNPDEIREFIAYICRKENLKLKQRKSDDDDIYEEIIQHSQFDIRRLIYILESLKMIHGNNDVTLDEFDAYREISKTKDIDPGIYKATGTLLNDYEGISGALSLYEEERATIPLMVHENYPSNIKHQYPKMSVEDQISVIHKISESISESDKIDGLIYSNQCWSLQPVHGFYSCVLPSYFINMHPNKLRMSEIYKYTQDYNKTSIKKINNKVIKKAQENQHLKRVSIYDFLYMASILKTLLERKDFEAVATLMKPYGLKLKEIESIIKIDKIKKMKNTLTGKQKTQLKELLGVDE.

Polar residues predominate over residues 1–11 (MSKTAKNTKTI). Residues 1–31 (MSKTAKNTKTIKSVKSVNKDNKPNKDNKDDK) form a disordered region. Basic and acidic residues predominate over residues 17-31 (VNKDNKPNKDNKDDK).

Belongs to the activator 1 large subunit family.

Functionally, part of the RFC clamp loader complex which loads the PCNA sliding clamp onto DNA. This is Putative replication factor C large subunit from Acanthamoeba polyphaga (Amoeba).